Consider the following 30-residue polypeptide: uncharacterized protein (30 aa).

Residues Met1–Ser22 form the signal peptide.

This is an uncharacterized protein from Schizosaccharomyces pombe (strain 972 / ATCC 24843) (Fission yeast).